Consider the following 171-residue polypeptide: Co-chaperone protein HscB homolog (171 aa).

Positions 2–74 (NHFELFGLPS…ISRAEYILAE (73 aa)) constitute a J domain.

Belongs to the HscB family. As to quaternary structure, interacts with HscA and stimulates its ATPase activity.

Functionally, co-chaperone involved in the maturation of iron-sulfur cluster-containing proteins. Seems to help targeting proteins to be folded toward HscA. This Vibrio parahaemolyticus serotype O3:K6 (strain RIMD 2210633) protein is Co-chaperone protein HscB homolog.